A 264-amino-acid polypeptide reads, in one-letter code: Nicotinamide N-methyltransferase (264 aa).

Citrulline; alternate is present on Arg18. S-adenosyl-L-methionine contacts are provided by Tyr20, Tyr25, Gly63, Tyr69, Asp85, Thr87, and Asn90. A Citrulline; alternate modification is found at Arg132. S-adenosyl-L-methionine contacts are provided by residues 142–143 and Thr163; that span reads DV. Arg181 is subject to Citrulline; alternate. Nicotinamide contacts are provided by Asp197 and Ser213.

The protein belongs to the class I-like SAM-binding methyltransferase superfamily. NNMT/PNMT/TEMT family. As to quaternary structure, monomer. In terms of processing, deiminated by PADI1 and PADI2. Expressed in white adipose tissue and liver (at protein level).

It localises to the cytoplasm. It carries out the reaction nicotinamide + S-adenosyl-L-methionine = 1-methylnicotinamide + S-adenosyl-L-homocysteine. Its pathway is cofactor metabolism. It participates in amino-acid degradation. Its activity is regulated as follows. Inhibited by 6-methoxynicotinamide (JBSNF-000088). Functionally, catalyzes the N-methylation of nicotinamide using the universal methyl donor S-adenosyl-L-methionine to form N1-methylnicotinamide and S-adenosyl-L-homocysteine, a predominant nicotinamide/vitamin B3 clearance pathway. Plays a central role in regulating cellular methylation potential, by consuming S-adenosyl-L-methionine and limiting its availability for other methyltransferases. Actively mediates genome-wide epigenetic and transcriptional changes through hypomethylation of repressive chromatin marks, such as H3K27me3. In a developmental context, contributes to low levels of the repressive histone marks that characterize pluripotent embryonic stem cell pre-implantation state. Acts as a metabolic regulator primarily on white adipose tissue energy expenditure as well as hepatic gluconeogenesis and cholesterol biosynthesis. In white adipocytes, regulates polyamine flux by consuming S-adenosyl-L-methionine which provides for propylamine group in polyamine biosynthesis, whereas by consuming nicotinamide controls NAD(+) levels through the salvage pathway. Via its product N1-methylnicotinamide regulates protein acetylation in hepatocytes, by repressing the ubiquitination and increasing the stability of SIRT1 deacetylase. Can also N-methylate other pyridines structurally related to nicotinamide and play a role in xenobiotic detoxification. This chain is Nicotinamide N-methyltransferase (Nnmt), found in Mus musculus (Mouse).